We begin with the raw amino-acid sequence, 342 residues long: Foldase protein PrsA (342 aa).

An N-terminal signal peptide occupies residues 1 to 22 (MVSVKKIVASALVGVLMFSAVG). The N-palmitoyl cysteine moiety is linked to residue Cys-23. Cys-23 carries S-diacylglycerol cysteine lipidation. The PpiC domain occupies 189-284 (DSGVLTKHLL…FGYHIIQAGA (96 aa)).

The protein belongs to the PrsA family.

It is found in the cell membrane. It carries out the reaction [protein]-peptidylproline (omega=180) = [protein]-peptidylproline (omega=0). In terms of biological role, plays a major role in protein secretion by helping the post-translocational extracellular folding of several secreted proteins. The protein is Foldase protein PrsA of Clostridium perfringens (strain 13 / Type A).